We begin with the raw amino-acid sequence, 331 residues long: HTH-type transcriptional regulator GntR (331 aa).

In terms of domain architecture, HTH lacI-type spans 6 to 60 (PVLQDVADRVGVTKMTVSRFLRNPEQVSVALRGKIAAALDELGYIPNRAPDILSN). A DNA-binding region (H-T-H motif) is located at residues 8-27 (LQDVADRVGVTKMTVSRFLR).

Its pathway is carbohydrate acid metabolism; D-gluconate degradation [regulation]. Functionally, negative regulator for the gluconate utilization system GNT-I, the gntUKR operon. The sequence is that of HTH-type transcriptional regulator GntR (gntR) from Escherichia coli O6:H1 (strain CFT073 / ATCC 700928 / UPEC).